Consider the following 379-residue polypeptide: Proton extrusion protein PxcA (379 aa).

A run of 4 helical transmembrane segments spans residues 153–173, 254–274, 300–320, and 337–357; these read TLVSLRILLLMILVPLLLQQI, AIKNVLADVVATIGFVLVCLF, FVIILFTDIFVGFHSPEGWTV, and FIDLFIATFPVILATIFKYWI.

It belongs to the CemA family.

The protein localises to the cell inner membrane. Functionally, required for H(+) efflux immediately after light irradiation to form a rapid H(+) concentration gradient across the thylakoid membranes. Together with PxcL, contributes to transient H(+) uptake following dark to light transition. This chain is Proton extrusion protein PxcA, found in Synechococcus sp. (strain RCC307).